Here is a 490-residue protein sequence, read N- to C-terminus: Betaine aldehyde dehydrogenase (490 aa).

Residues T26, I27, and D93 each contribute to the K(+) site. An NAD(+)-binding site is contributed by 150 to 152; that stretch reads GAW. K162 acts as the Charge relay system in catalysis. NAD(+) is bound at residue 176 to 179; it reads KPSE. V180 contributes to the K(+) binding site. 230-233 provides a ligand contact to NAD(+); sequence GVAS. Residue L246 participates in K(+) binding. E252 acts as the Proton acceptor in catalysis. Residues G254, C286, and E387 each contribute to the NAD(+) site. Residue C286 is the Nucleophile of the active site. C286 carries the cysteine sulfenic acid (-SOH) modification. Residues K457 and G460 each contribute to the K(+) site. The active-site Charge relay system is E464.

It belongs to the aldehyde dehydrogenase family. Dimer of dimers. The cofactor is K(+).

The enzyme catalyses betaine aldehyde + NAD(+) + H2O = glycine betaine + NADH + 2 H(+). Its pathway is amine and polyamine biosynthesis; betaine biosynthesis via choline pathway; betaine from betaine aldehyde: step 1/1. In terms of biological role, involved in the biosynthesis of the osmoprotectant glycine betaine. Catalyzes the irreversible oxidation of betaine aldehyde to the corresponding acid. This chain is Betaine aldehyde dehydrogenase, found in Klebsiella pneumoniae (strain 342).